Consider the following 324-residue polypeptide: Acetyl-coenzyme A carboxylase carboxyl transferase subunit alpha (324 aa).

The CoA carboxyltransferase C-terminal domain maps to 37 to 291; it reads KLERRLDKLK…RDFILREWLR (255 aa).

The protein belongs to the AccA family. As to quaternary structure, acetyl-CoA carboxylase is a heterohexamer composed of biotin carboxyl carrier protein (AccB), biotin carboxylase (AccC) and two subunits each of ACCase subunit alpha (AccA) and ACCase subunit beta (AccD).

The protein resides in the cytoplasm. The enzyme catalyses N(6)-carboxybiotinyl-L-lysyl-[protein] + acetyl-CoA = N(6)-biotinyl-L-lysyl-[protein] + malonyl-CoA. Its pathway is lipid metabolism; malonyl-CoA biosynthesis; malonyl-CoA from acetyl-CoA: step 1/1. In terms of biological role, component of the acetyl coenzyme A carboxylase (ACC) complex. First, biotin carboxylase catalyzes the carboxylation of biotin on its carrier protein (BCCP) and then the CO(2) group is transferred by the carboxyltransferase to acetyl-CoA to form malonyl-CoA. This chain is Acetyl-coenzyme A carboxylase carboxyl transferase subunit alpha, found in Chlamydia abortus (strain DSM 27085 / S26/3) (Chlamydophila abortus).